The following is a 771-amino-acid chain: DNA polymerase 1 (771 aa).

The protein belongs to the DNA polymerase type-B family.

The enzyme catalyses DNA(n) + a 2'-deoxyribonucleoside 5'-triphosphate = DNA(n+1) + diphosphate. This Pyrococcus abyssi protein is DNA polymerase 1 (polI).